A 73-amino-acid polypeptide reads, in one-letter code: Small ribosomal subunit protein bS21 (73 aa).

This sequence belongs to the bacterial ribosomal protein bS21 family.

The sequence is that of Small ribosomal subunit protein bS21 from Parvibaculum lavamentivorans (strain DS-1 / DSM 13023 / NCIMB 13966).